An 86-amino-acid chain; its full sequence is MKSIVFVALFGLALLAVVCSASEDAHKELLKEVVRAMVVDKTDAVQAEERECRWYLGECSQDGDCCKHLQCHSNYEWCIWDGTFSK.

Residues 1 to 21 form the signal peptide; it reads MKSIVFVALFGLALLAVVCSA. Positions 22-50 are excised as a propeptide; that stretch reads SEDAHKELLKEVVRAMVVDKTDAVQAEER. 3 disulfides stabilise this stretch: C52/C66, C59/C71, and C65/C78.

It belongs to the neurotoxin 10 (Hwtx-1) family. 17 (Hntx-9) subfamily. As to expression, expressed by the venom gland.

Its subcellular location is the secreted. Its function is as follows. Ion channel inhibitor. The chain is Omega-theraphotoxin-Hhn1d from Cyriopagopus hainanus (Chinese bird spider).